The primary structure comprises 874 residues: DNA primase (874 aa).

The CHC2-type zinc finger occupies 786–824 (CLRHTHRASSKNVRVFLVLYYTSQAITVTFMSQCFAGRC). The segment covering 848–857 (ASQDSTTSQL) has biased composition (polar residues). The disordered stretch occupies residues 848 to 874 (ASQDSTTSQLARRRDRQDGSFSETLPN).

This sequence belongs to the herpesviridae DNA primase family. As to quaternary structure, associates with the helicase and the primase-associated factor to form the helicase-primase factor.

Its subcellular location is the host nucleus. Functionally, essential component of the helicase/primase complex. Unwinds the DNA at the replication forks and generates single-stranded DNA for both leading and lagging strand synthesis. The primase initiates primer synthesis and thereby produces large amount of short RNA primers on the lagging strand that the polymerase elongates using dNTPs. The chain is DNA primase from Epstein-Barr virus (strain B95-8) (HHV-4).